We begin with the raw amino-acid sequence, 488 residues long: Probable cytosol aminopeptidase (488 aa).

Mn(2+) contacts are provided by Lys254 and Asp259. The active site involves Lys266. 3 residues coordinate Mn(2+): Asp277, Asp336, and Glu338. The active site involves Arg340.

The protein belongs to the peptidase M17 family. Mn(2+) is required as a cofactor.

Its subcellular location is the cytoplasm. The enzyme catalyses Release of an N-terminal amino acid, Xaa-|-Yaa-, in which Xaa is preferably Leu, but may be other amino acids including Pro although not Arg or Lys, and Yaa may be Pro. Amino acid amides and methyl esters are also readily hydrolyzed, but rates on arylamides are exceedingly low.. The catalysed reaction is Release of an N-terminal amino acid, preferentially leucine, but not glutamic or aspartic acids.. Its function is as follows. Presumably involved in the processing and regular turnover of intracellular proteins. Catalyzes the removal of unsubstituted N-terminal amino acids from various peptides. In Roseiflexus castenholzii (strain DSM 13941 / HLO8), this protein is Probable cytosol aminopeptidase.